The sequence spans 225 residues: Protein E26 (225 aa).

As to quaternary structure, interacts with proteins IE0 and IE1. Interacts with protein FP25K. Interacts with host importin alpha-16. Post-translationally, palmitoylated.

Its subcellular location is the host nucleus inner membrane. It is found in the virion. It localises to the host cytoplasm. The protein localises to the host nucleus. Plays a role in the sorting of ODV envelope proteins to the host inner nuclear membrane. May facilitate the fusion and release of nucleocapsids into the cytoplasm. Modulates the expression levels of IE0 and IE1. In Lepidoptera (butterflies and moths), this protein is Protein E26 (DA26).